A 25-amino-acid chain; its full sequence is M-poneritoxin-Ng1a (25 aa).

In terms of tissue distribution, expressed by the venom gland.

It localises to the secreted. The protein localises to the target cell membrane. Its function is as follows. Has a broad spectrum of activity against both Gram-positive and Gram-negative bacteria and S.cerevisiae. Has insecticidal and hemolytic activities. May act by disrupting the integrity of the bacterial cell membrane. The protein is M-poneritoxin-Ng1a of Neoponera goeldii (Ponerine ant).